The sequence spans 192 residues: Ion-translocating oxidoreductase complex subunit B (192 aa).

Residues 1-26 are hydrophobic; it reads MEMIVIAVVALTLLALLFGMLLGYAS. One can recognise a 4Fe-4S domain in the interval 32–91; it reads EEDPVVDQVDELLPQSQCGQCGYPGCRPYAEAVANNGEQINRCVPGGEPVMQKIATLLNV. [4Fe-4S] cluster is bound by residues cysteine 49, cysteine 52, cysteine 57, cysteine 74, cysteine 117, cysteine 120, cysteine 123, cysteine 127, cysteine 147, cysteine 150, cysteine 153, and cysteine 157. 4Fe-4S ferredoxin-type domains follow at residues 108-137 and 138-167; these read MLAV…GATR and AMHT…LRPA.

The protein belongs to the 4Fe4S bacterial-type ferredoxin family. RnfB subfamily. In terms of assembly, the complex is composed of six subunits: RnfA, RnfB, RnfC, RnfD, RnfE and RnfG. [4Fe-4S] cluster serves as cofactor.

The protein resides in the cell inner membrane. Its function is as follows. Part of a membrane-bound complex that couples electron transfer with translocation of ions across the membrane. The sequence is that of Ion-translocating oxidoreductase complex subunit B from Cronobacter sakazakii (strain ATCC BAA-894) (Enterobacter sakazakii).